We begin with the raw amino-acid sequence, 729 residues long: E3 ubiquitin-protein ligase SH3RF2 (729 aa).

The RING-type zinc finger occupies 12-53 (CPVCFEKLDVTAKVLPCQHTFCKPCLQRVFKAHKELRCPECR). Positions 78 to 105 (SGQSSGRGGSFRRPGTMTLQDGRKSRTN) are disordered. SH3 domains lie at 125 to 184 (DGVP…VIKQ) and 187 to 252 (QPPP…PNLT). The disordered stretch occupies residues 258–297 (EKNKGRQSSRTKNLSLVSSSSRGNTSTLRRGPGSRRKVPG). Over residues 263–285 (RQSSRTKNLSLVSSSSRGNTSTL) the composition is skewed to polar residues. The tract at residues 370 to 459 (VVSLPGSQQH…RSPGLYTTWT (90 aa)) is interaction with PAK4. In terms of domain architecture, SH3 3 spans 380–441 (LSANMFVALH…PNNYVIPIFR (62 aa)). Disordered regions lie at residues 497-526 (STAG…QRPL) and 610-677 (KSEP…SQPE). Over residues 517-526 (RKNGSLQRPL) the composition is skewed to polar residues. An interaction with PPP1CA region spans residues 641–646 (KTVRFQ). Residue Ser649 is modified to Phosphoserine.

Belongs to the SH3RF family. Interacts with FASLG and PPP1CA. Interacts with PAK4 and TNFRSF1A. Interacts with DLK1, MAP3K10/MLK2, MAPK8IP1/JIP1, MAPK8IP2/JIP2 and MAPK8IP3/JIP3. Interacts with RAC1 (both active GTP- or inactive GDP-bound forms). Post-translationally, autoubiquitinated. Heart (at protein level). Up-regulated in colon cancer tissues as compared to normal colon tissues (at protein level). Testis. In the heart, present in the apex, left atrium, right atrium, left ventricle and right ventricle, but not in the aorta.

It is found in the nucleus. The enzyme catalyses S-ubiquitinyl-[E2 ubiquitin-conjugating enzyme]-L-cysteine + [acceptor protein]-L-lysine = [E2 ubiquitin-conjugating enzyme]-L-cysteine + N(6)-ubiquitinyl-[acceptor protein]-L-lysine.. The protein operates within protein modification; protein ubiquitination. Has E3 ubiquitin-protein ligase activity. Acts as an anti-apoptotic regulator of the JNK pathway by ubiquitinating and promoting the degradation of SH3RF1, a scaffold protein that is required for pro-apoptotic JNK activation. Facilitates TNF-alpha-mediated recruitment of adapter proteins TRADD and RIPK1 to TNFRSF1A and regulates PAK4 protein stability via inhibition of its ubiquitin-mediated proteasomal degradation. Inhibits PPP1CA phosphatase activity. This is E3 ubiquitin-protein ligase SH3RF2 (SH3RF2) from Homo sapiens (Human).